The following is a 282-amino-acid chain: Tryptophan 2,3-dioxygenase (282 aa).

Residues 51–55, tyrosine 113, and arginine 117 each bind substrate; that span reads FIIQH. Position 240 (histidine 240) interacts with heme. Threonine 254 is a binding site for substrate.

The protein belongs to the tryptophan 2,3-dioxygenase family. In terms of assembly, homotetramer. The cofactor is heme.

It carries out the reaction L-tryptophan + O2 = N-formyl-L-kynurenine. It functions in the pathway amino-acid degradation; L-tryptophan degradation via kynurenine pathway; L-kynurenine from L-tryptophan: step 1/2. Heme-dependent dioxygenase that catalyzes the oxidative cleavage of the L-tryptophan (L-Trp) pyrrole ring and converts L-tryptophan to N-formyl-L-kynurenine. Catalyzes the oxidative cleavage of the indole moiety. This Polaromonas naphthalenivorans (strain CJ2) protein is Tryptophan 2,3-dioxygenase.